The primary structure comprises 252 residues: UPF0246 protein AM1_4276 (252 aa).

Belongs to the UPF0246 family.

This is UPF0246 protein AM1_4276 from Acaryochloris marina (strain MBIC 11017).